Consider the following 650-residue polypeptide: Acetyl-coenzyme A synthetase (650 aa).

Residues 191-194 (RGGR), T311, and N335 contribute to the CoA site. ATP contacts are provided by residues 387-389 (GEP), 411-416 (DTWWQT), D500, and R515. S523 lines the CoA pocket. Residue R526 coordinates ATP. Residues V537, H539, and V542 each coordinate Mg(2+). Residue R584 participates in CoA binding. K609 is subject to N6-acetyllysine.

This sequence belongs to the ATP-dependent AMP-binding enzyme family. It depends on Mg(2+) as a cofactor. In terms of processing, acetylated. Deacetylation by the SIR2-homolog deacetylase activates the enzyme.

It catalyses the reaction acetate + ATP + CoA = acetyl-CoA + AMP + diphosphate. Functionally, catalyzes the conversion of acetate into acetyl-CoA (AcCoA), an essential intermediate at the junction of anabolic and catabolic pathways. AcsA undergoes a two-step reaction. In the first half reaction, AcsA combines acetate with ATP to form acetyl-adenylate (AcAMP) intermediate. In the second half reaction, it can then transfer the acetyl group from AcAMP to the sulfhydryl group of CoA, forming the product AcCoA. The protein is Acetyl-coenzyme A synthetase of Shewanella baltica (strain OS155 / ATCC BAA-1091).